The chain runs to 265 residues: uncharacterized protein (265 aa).

Residues 233–265 are disordered; that stretch reads STACGSDQRPTRLPRASCSSRSISGSAARPWKR. Positions 247-265 are enriched in low complexity; it reads RASCSSRSISGSAARPWKR.

This is an uncharacterized protein from Escherichia coli.